A 286-amino-acid chain; its full sequence is Alpha-ketoglutarate-dependent dioxygenase alkB homolog 3 (286 aa).

The disordered stretch occupies residues 21-45 (QAIAQPATTAKSHLHQKPGQTWKNK). A compositionally biased stretch (polar residues) spans 22-31 (AIAQPATTAK). Substrate-binding positions include Trp-115 and 141–143 (YTY). The region spanning 172–278 (TFNSLLCNLY…RVNLTFRTVY (107 aa)) is the Fe2OG dioxygenase domain. Leu-177 bears the (4R)-5-hydroxyleucine; alternate mark. At Leu-177 the chain carries (4R)-5-oxoleucine; alternate. 179 to 181 (NLY) is a binding site for 2-oxoglutarate. Positions 191 and 193 each coordinate Fe cation. Asp-194 serves as a coordination point for substrate. A Fe cation-binding site is contributed by His-257. 2-oxoglutarate contacts are provided by residues 269 to 275 (RVNLTFR) and Arg-275.

Belongs to the alkB family. As to quaternary structure, interacts with the ASCC complex composed of ASCC1, ASCC2 and ASCC3. Interacts directly with ASCC3, and is thereby recruited to the ASCC complex. Interacts with OTUD4; the interaction is direct. Interacts with USP7 and USP9X. It depends on Fe(2+) as a cofactor. Ubiquitinated; undergoes 'Lys-48'-linked polyubiquitination. OTUD4 promotes USP7 and USP9X-dependent deubiquitination of 'Lys-48'-polyubiquitinated ALKBH3 promoting the repair of alkylated DNA lesions. As to expression, ubiquitous. Detected in heart, pancreas, skeletal muscle, thymus, testis, ovary, spleen, prostate, small intestine, peripheral blood leukocytes, urinary bladder and colon.

It localises to the nucleus. It is found in the cytoplasm. The enzyme catalyses an N(1)-methyladenosine in mRNA + 2-oxoglutarate + O2 = an adenosine in mRNA + formaldehyde + succinate + CO2. The catalysed reaction is a methylated nucleobase within DNA + 2-oxoglutarate + O2 = a nucleobase within DNA + formaldehyde + succinate + CO2. It catalyses the reaction an N(1)-methyl-2'-deoxyadenosine in single-stranded DNA + 2-oxoglutarate + O2 = a 2'-deoxyadenosine in single-stranded DNA + formaldehyde + succinate + CO2 + H(+). It carries out the reaction an N(3)-methyl-2'-deoxycytidine in single-stranded DNA + 2-oxoglutarate + O2 = a 2'-deoxycytidine in single-stranded DNA + formaldehyde + succinate + CO2 + H(+). The enzyme catalyses a 3,N(4)-etheno-2'-deoxycytidine in single-stranded DNA + 2-oxoglutarate + O2 + H2O = a 2'-deoxycytidine in single-stranded DNA + glyoxal + succinate + CO2. Its activity is regulated as follows. Activated by ascorbate. In terms of biological role, dioxygenase that mediates demethylation of DNA and RNA containing 1-methyladenosine (m1A). Repairs alkylated DNA containing 1-methyladenosine (m1A) and 3-methylcytosine (m3C) by oxidative demethylation. Has a strong preference for single-stranded DNA. Able to process alkylated m3C within double-stranded regions via its interaction with ASCC3, which promotes DNA unwinding to generate single-stranded substrate needed for ALKBH3. Can repair exocyclic 3,N4-ethenocytosine adducs in single-stranded DNA. Also acts on RNA. Demethylates N(1)-methyladenosine (m1A) RNA, an epigenetic internal modification of messenger RNAs (mRNAs) highly enriched within 5'-untranslated regions (UTRs) and in the vicinity of start codons. Requires molecular oxygen, alpha-ketoglutarate and iron. The protein is Alpha-ketoglutarate-dependent dioxygenase alkB homolog 3 of Homo sapiens (Human).